Consider the following 113-residue polypeptide: Large ribosomal subunit protein bL17 (113 aa).

This sequence belongs to the bacterial ribosomal protein bL17 family. In terms of assembly, part of the 50S ribosomal subunit. Contacts protein L32.

The sequence is that of Large ribosomal subunit protein bL17 from Clostridium tetani (strain Massachusetts / E88).